Reading from the N-terminus, the 468-residue chain is Citrate synthase, mitochondrial (468 aa).

Residues 1–30 (MSFLSISRLAPRLLSSKNAACVVVAARNAS) constitute a mitochondrion transit peptide. Residues H303 and H349 contribute to the active site. Residue R358 participates in oxaloacetate binding. The active site involves D404. Residues R430 and R450 each coordinate oxaloacetate.

It belongs to the citrate synthase family. Homodimer.

It is found in the mitochondrion matrix. It catalyses the reaction oxaloacetate + acetyl-CoA + H2O = citrate + CoA + H(+). It participates in carbohydrate metabolism; tricarboxylic acid cycle; isocitrate from oxaloacetate: step 1/2. Key enzyme of the Krebs tricarboxylic acid cycle which catalyzes the synthesis of citrate from acetyl coenzyme A and oxaloacetate. This is Citrate synthase, mitochondrial (cs) from Danio rerio (Zebrafish).